We begin with the raw amino-acid sequence, 145 residues long: Ribonuclease P protein component (145 aa).

The segment covering 120-130 (LPAAPGTMPPA) has biased composition (low complexity). Residues 120 to 145 (LPAAPGTMPPARTMHPSSLSPTEPDL) are disordered. Over residues 134 to 145 (HPSSLSPTEPDL) the composition is skewed to polar residues.

It belongs to the RnpA family. In terms of assembly, consists of a catalytic RNA component (M1 or rnpB) and a protein subunit.

The catalysed reaction is Endonucleolytic cleavage of RNA, removing 5'-extranucleotides from tRNA precursor.. RNaseP catalyzes the removal of the 5'-leader sequence from pre-tRNA to produce the mature 5'-terminus. It can also cleave other RNA substrates such as 4.5S RNA. The protein component plays an auxiliary but essential role in vivo by binding to the 5'-leader sequence and broadening the substrate specificity of the ribozyme. In Xanthomonas oryzae pv. oryzae (strain MAFF 311018), this protein is Ribonuclease P protein component.